A 102-amino-acid polypeptide reads, in one-letter code: Antitoxin VapB46 (102 aa).

Belongs to the phD/YefM antitoxin family.

Functionally, antitoxin component of a type II toxin-antitoxin (TA) system. Neutralizes the effect of cognate toxin VapC46. The polypeptide is Antitoxin VapB46 (vapB46) (Mycobacterium tuberculosis (strain CDC 1551 / Oshkosh)).